Here is a 332-residue protein sequence, read N- to C-terminus: Phosphate acyltransferase (332 aa).

This sequence belongs to the PlsX family. Homodimer. Probably interacts with PlsY.

It is found in the cytoplasm. The catalysed reaction is a fatty acyl-[ACP] + phosphate = an acyl phosphate + holo-[ACP]. The protein operates within lipid metabolism; phospholipid metabolism. In terms of biological role, catalyzes the reversible formation of acyl-phosphate (acyl-PO(4)) from acyl-[acyl-carrier-protein] (acyl-ACP). This enzyme utilizes acyl-ACP as fatty acyl donor, but not acyl-CoA. The sequence is that of Phosphate acyltransferase from Streptococcus mutans serotype c (strain ATCC 700610 / UA159).